Reading from the N-terminus, the 478-residue chain is Transcript termination protein A18 (478 aa).

The region spanning 98–254 is the Helicase ATP-binding domain; the sequence is KLSTHRPMYM…NDVVNVLKVS (157 aa). ATP is bound at residue 111 to 118; the sequence is LSCGFGKT. The short motif at 204 to 207 is the DESH box element; that stretch reads DESH. The 153-residue stretch at 302 to 454 folds into the Helicase C-terminal domain; that stretch reads PRNNLIVDTV…IVSVSTDKLG (153 aa). The tract at residues 456–478 is disordered; the sequence is QQEGKEGTKEEPALTKAFSSQIR. A compositionally biased stretch (basic and acidic residues) spans 458-468; the sequence is EGKEGTKEEPA.

The protein belongs to the helicase family. Poxviruses subfamily. As to quaternary structure, interacts with G2. Might be part of a transcription complex composed at least of G2, A18, and H5.

The protein localises to the virion. In terms of biological role, DNA helicase which seems to act as a postreplicative transcription termination factor. Involved in ATP-dependent release of nascent RNA. Forms a stable complex with single-stranded DNA, and to a lesser extent RNA. The polypeptide is Transcript termination protein A18 (Oryctolagus cuniculus (Rabbit)).